The sequence spans 283 residues: Shikimate dehydrogenase (NADP(+)) (283 aa).

Shikimate contacts are provided by residues Ser16–Ser18 and Thr63. The active-site Proton acceptor is the Lys67. Asp79 contributes to the NADP(+) binding site. 2 residues coordinate shikimate: Asn88 and Asp103. NADP(+) contacts are provided by residues Gly128–Ala132, Ala223, and Gly243.

The protein belongs to the shikimate dehydrogenase family. As to quaternary structure, homodimer.

It catalyses the reaction shikimate + NADP(+) = 3-dehydroshikimate + NADPH + H(+). The protein operates within metabolic intermediate biosynthesis; chorismate biosynthesis; chorismate from D-erythrose 4-phosphate and phosphoenolpyruvate: step 4/7. Its function is as follows. Involved in the biosynthesis of the chorismate, which leads to the biosynthesis of aromatic amino acids. Catalyzes the reversible NADPH linked reduction of 3-dehydroshikimate (DHSA) to yield shikimate (SA). This chain is Shikimate dehydrogenase (NADP(+)), found in Xanthomonas oryzae pv. oryzae (strain MAFF 311018).